The following is a 459-amino-acid chain: Exodeoxyribonuclease 7 large subunit (459 aa).

This sequence belongs to the XseA family. As to quaternary structure, heterooligomer composed of large and small subunits.

Its subcellular location is the cytoplasm. It carries out the reaction Exonucleolytic cleavage in either 5'- to 3'- or 3'- to 5'-direction to yield nucleoside 5'-phosphates.. Bidirectionally degrades single-stranded DNA into large acid-insoluble oligonucleotides, which are then degraded further into small acid-soluble oligonucleotides. This is Exodeoxyribonuclease 7 large subunit from Pseudomonas fluorescens (strain SBW25).